A 168-amino-acid polypeptide reads, in one-letter code: MGWRFPSPSPRQASPVAPLLAAPTAVRSCSHCSGQREAISSHPLQLETPELGVCLPWHWEGWRQVRKITPSLPQPPGSQVPLEVTFHVRATLPHFRGGETKARRAREEGKLPSLGNAPAPRRRSVAWPAAEGSCAAPESSPPASEASLPAPESSLLVAGSGDLCADSF.

The N-terminal 29 residues, 1–29, are a transit peptide targeting the mitochondrion; it reads MGWRFPSPSPRQASPVAPLLAAPTAVRSC. A compositionally biased stretch (basic and acidic residues) spans 98 to 110; the sequence is GETKARRAREEGK. A disordered region spans residues 98-152; that stretch reads GETKARRAREEGKLPSLGNAPAPRRRSVAWPAAEGSCAAPESSPPASEASLPAPE. Over residues 128–152 the composition is skewed to low complexity; that stretch reads PAAEGSCAAPESSPPASEASLPAPE.

It localises to the mitochondrion. This is an uncharacterized protein from Homo sapiens (Human).